A 129-amino-acid polypeptide reads, in one-letter code: Serum amyloid A-2 protein (129 aa).

A signal peptide spans 1 to 18 (MKLFTGLIFCSLVLGVSS). A Pyrrolidone carboxylic acid modification is found at Gln-19. The tract at residues 92-129 (GDSGHGVEDSKADQAANEWGRSGKDPNHFRPSGLPDKY) is disordered.

It belongs to the SAA family. In terms of assembly, apolipoprotein of the HDL complex. Expressed by the liver; secreted in plasma.

The protein localises to the secreted. In terms of biological role, major acute phase reactant. The chain is Serum amyloid A-2 protein (SAA2P0DJI9) from Neovison vison (American mink).